Consider the following 288-residue polypeptide: Beta-lactamase CARB-3 (288 aa).

A signal peptide spans 1 to 17; sequence MKFLLAFSLLIPSVVFA. The active-site Acyl-ester intermediate is the serine 65. Cysteine 72 and cysteine 118 are disulfide-bonded. A substrate-binding site is contributed by 229–231; it reads RSG.

Belongs to the class-A beta-lactamase family.

It catalyses the reaction a beta-lactam + H2O = a substituted beta-amino acid. Functionally, hydrolyzes both carbenicillin and oxacillin. The sequence is that of Beta-lactamase CARB-3 (carB3) from Pseudomonas aeruginosa.